An 89-amino-acid polypeptide reads, in one-letter code: Ragulator complex protein LAMTOR5 homolog (89 aa).

This sequence belongs to the LAMTOR5 family. As to quaternary structure, part of the Ragulator complex.

Its subcellular location is the cytoplasm. It localises to the lysosome. Its function is as follows. Regulator of the TOR pathway, a signaling cascade that promotes cell growth in response to growth factors, energy levels, and amino acids. As part of the Ragulator complex, may activate the TOR signaling cascade in response to amino acids. The protein is Ragulator complex protein LAMTOR5 homolog of Dictyostelium discoideum (Social amoeba).